The primary structure comprises 284 residues: D-tagatose-1,6-bisphosphate aldolase subunit GatY (284 aa).

The active-site Proton donor is D82. Positions 83 and 180 each coordinate Zn(2+). G181 provides a ligand contact to dihydroxyacetone phosphate. A Zn(2+)-binding site is contributed by H208. Dihydroxyacetone phosphate contacts are provided by residues G209 to S211 and N230 to T233.

Belongs to the class II fructose-bisphosphate aldolase family. TagBP aldolase GatY subfamily. In terms of assembly, forms a complex with GatZ. Zn(2+) is required as a cofactor.

The enzyme catalyses D-tagatofuranose 1,6-bisphosphate = D-glyceraldehyde 3-phosphate + dihydroxyacetone phosphate. The protein operates within carbohydrate metabolism; D-tagatose 6-phosphate degradation; D-glyceraldehyde 3-phosphate and glycerone phosphate from D-tagatose 6-phosphate: step 2/2. Functionally, catalytic subunit of the tagatose-1,6-bisphosphate aldolase GatYZ, which catalyzes the reversible aldol condensation of dihydroxyacetone phosphate (DHAP or glycerone-phosphate) with glyceraldehyde 3-phosphate (G3P) to produce tagatose 1,6-bisphosphate (TBP). Requires GatZ subunit for full activity and stability. Is involved in the catabolism of galactitol. The polypeptide is D-tagatose-1,6-bisphosphate aldolase subunit GatY (Escherichia coli O7:K1 (strain IAI39 / ExPEC)).